Consider the following 84-residue polypeptide: Small ribosomal subunit protein uS17 (84 aa).

This sequence belongs to the universal ribosomal protein uS17 family. In terms of assembly, part of the 30S ribosomal subunit.

One of the primary rRNA binding proteins, it binds specifically to the 5'-end of 16S ribosomal RNA. This Clostridium kluyveri (strain NBRC 12016) protein is Small ribosomal subunit protein uS17.